A 462-amino-acid chain; its full sequence is Glutamate--tRNA ligase 1 (462 aa).

The 'HIGH' region motif lies at 8–18 (PSPTGYLHIGG). The 'KMSKS' region motif lies at 237-241 (KLSKR). Lysine 240 is a binding site for ATP.

Belongs to the class-I aminoacyl-tRNA synthetase family. Glutamate--tRNA ligase type 1 subfamily. In terms of assembly, monomer.

It is found in the cytoplasm. It catalyses the reaction tRNA(Glu) + L-glutamate + ATP = L-glutamyl-tRNA(Glu) + AMP + diphosphate. In terms of biological role, catalyzes the attachment of glutamate to tRNA(Glu) in a two-step reaction: glutamate is first activated by ATP to form Glu-AMP and then transferred to the acceptor end of tRNA(Glu). The chain is Glutamate--tRNA ligase 1 from Campylobacter hominis (strain ATCC BAA-381 / DSM 21671 / CCUG 45161 / LMG 19568 / NCTC 13146 / CH001A).